The sequence spans 59 residues: Large ribosomal subunit protein uL30 (59 aa).

It belongs to the universal ribosomal protein uL30 family. Part of the 50S ribosomal subunit.

The sequence is that of Large ribosomal subunit protein uL30 from Macrococcus caseolyticus (strain JCSC5402) (Macrococcoides caseolyticum).